The following is a 206-amino-acid chain: Ribosome maturation factor RimM (206 aa).

Residues 113-206 (DDEYYWVDLI…RIDSNWPTEL (94 aa)) form the PRC barrel domain.

The protein belongs to the RimM family. As to quaternary structure, binds ribosomal protein uS19.

It localises to the cytoplasm. In terms of biological role, an accessory protein needed during the final step in the assembly of 30S ribosomal subunit, possibly for assembly of the head region. Essential for efficient processing of 16S rRNA. May be needed both before and after RbfA during the maturation of 16S rRNA. It has affinity for free ribosomal 30S subunits but not for 70S ribosomes. This Bordetella petrii (strain ATCC BAA-461 / DSM 12804 / CCUG 43448) protein is Ribosome maturation factor RimM.